A 335-amino-acid chain; its full sequence is Mycobacterial beta-ketoacyl-[acyl-carrier-protein] synthase III (335 aa).

Residues Cys122 and His258 contribute to the active site. Positions Gln259–Arg263 are ACP-binding. Asn289 is a catalytic residue.

Belongs to the thiolase-like superfamily. FabH family. As to quaternary structure, homodimer.

Its subcellular location is the cytoplasm. It catalyses the reaction malonyl-[ACP] + dodecanoyl-CoA + H(+) = 3-oxotetradecanoyl-[ACP] + CO2 + CoA. It participates in lipid metabolism; fatty acid biosynthesis. The protein operates within lipid metabolism; mycolic acid biosynthesis. Catalyzes the condensation reaction of fatty acid synthesis by the addition to an acyl acceptor of two carbons from malonyl-ACP. Catalyzes the first condensation reaction which initiates fatty acid synthesis and may therefore play a role in governing the total rate of fatty acid production. Possesses both acetoacetyl-ACP synthase and acetyl transacylase activities. Its substrate specificity determines the biosynthesis of branched-chain and/or straight-chain of fatty acids. The chain is Mycobacterial beta-ketoacyl-[acyl-carrier-protein] synthase III from Mycobacterium ulcerans (strain Agy99).